A 272-amino-acid chain; its full sequence is Shikimate dehydrogenase (NADP(+)) (272 aa).

Residues 14-16 (SKS) and T61 each bind shikimate. The active-site Proton acceptor is K65. Residue E77 participates in NADP(+) binding. Residues N86 and D102 each coordinate shikimate. NADP(+)-binding positions include 126–130 (GAGGA), 149–154 (NRTASR), and M213. Y215 lines the shikimate pocket. G237 provides a ligand contact to NADP(+).

Belongs to the shikimate dehydrogenase family. As to quaternary structure, homodimer.

The enzyme catalyses shikimate + NADP(+) = 3-dehydroshikimate + NADPH + H(+). It participates in metabolic intermediate biosynthesis; chorismate biosynthesis; chorismate from D-erythrose 4-phosphate and phosphoenolpyruvate: step 4/7. Involved in the biosynthesis of the chorismate, which leads to the biosynthesis of aromatic amino acids. Catalyzes the reversible NADPH linked reduction of 3-dehydroshikimate (DHSA) to yield shikimate (SA). The protein is Shikimate dehydrogenase (NADP(+)) of Salmonella typhimurium (strain LT2 / SGSC1412 / ATCC 700720).